The chain runs to 310 residues: N-acetyl-gamma-glutamyl-phosphate reductase (310 aa).

C117 is an active-site residue.

Belongs to the NAGSA dehydrogenase family. Type 2 subfamily.

It is found in the cytoplasm. It catalyses the reaction N-acetyl-L-glutamate 5-semialdehyde + phosphate + NADP(+) = N-acetyl-L-glutamyl 5-phosphate + NADPH + H(+). The protein operates within amino-acid biosynthesis; L-arginine biosynthesis; N(2)-acetyl-L-ornithine from L-glutamate: step 3/4. Its function is as follows. Catalyzes the NADPH-dependent reduction of N-acetyl-5-glutamyl phosphate to yield N-acetyl-L-glutamate 5-semialdehyde. The sequence is that of N-acetyl-gamma-glutamyl-phosphate reductase from Brucella abortus (strain S19).